The chain runs to 230 residues: MALSFFKDLPEEHPRHLIPALCRQFYHLGWVTGTGGGMSIKQDNEIYIAPSGVQKERMQPEDLFVQNIDGKDLQLPPEIKGLSKSQCTPLFMLAYRHRNAGAVIHTHSQHAVMATLLWPGKTFRCTHLEMIKGIFDEADERYLRYDEQLIVPIIENTPHERDLADSMYAAMMEYPGCSAVLVRRHGVYVWGKTWEKAKTMSECYDYLFSIAVQMKKAGLNPEKFEKPSLG.

Cys87 lines the substrate pocket. Zn(2+)-binding residues include His105 and His107. Glu129 functions as the Proton donor/acceptor in the catalytic mechanism. Position 185 (His185) interacts with Zn(2+).

Belongs to the aldolase class II family. MtnB subfamily. The cofactor is Zn(2+).

Its subcellular location is the cytoplasm. It catalyses the reaction 5-(methylsulfanyl)-D-ribulose 1-phosphate = 5-methylsulfanyl-2,3-dioxopentyl phosphate + H2O. It functions in the pathway amino-acid biosynthesis; L-methionine biosynthesis via salvage pathway; L-methionine from S-methyl-5-thio-alpha-D-ribose 1-phosphate: step 2/6. Catalyzes the dehydration of methylthioribulose-1-phosphate (MTRu-1-P) into 2,3-diketo-5-methylthiopentyl-1-phosphate (DK-MTP-1-P). In Drosophila grimshawi (Hawaiian fruit fly), this protein is Probable methylthioribulose-1-phosphate dehydratase.